The primary structure comprises 145 residues: Deoxyuridine 5'-triphosphate nucleotidohydrolase (145 aa).

Substrate-binding positions include Arg64–Gly66, Asn77, Thr81–Asp83, and Met91.

Belongs to the dUTPase family. Mg(2+) serves as cofactor.

The enzyme catalyses dUTP + H2O = dUMP + diphosphate + H(+). Its pathway is pyrimidine metabolism; dUMP biosynthesis; dUMP from dCTP (dUTP route): step 2/2. Its function is as follows. This enzyme is involved in nucleotide metabolism: it produces dUMP, the immediate precursor of thymidine nucleotides and it decreases the intracellular concentration of dUTP so that uracil cannot be incorporated into DNA. This Leptospira borgpetersenii serovar Hardjo-bovis (strain JB197) protein is Deoxyuridine 5'-triphosphate nucleotidohydrolase.